A 361-amino-acid chain; its full sequence is DNA replication and repair protein RecF (361 aa).

30–37 (GPNGSGKT) contributes to the ATP binding site.

The protein belongs to the RecF family.

It localises to the cytoplasm. Its function is as follows. The RecF protein is involved in DNA metabolism; it is required for DNA replication and normal SOS inducibility. RecF binds preferentially to single-stranded, linear DNA. It also seems to bind ATP. The protein is DNA replication and repair protein RecF of Yersinia enterocolitica serotype O:8 / biotype 1B (strain NCTC 13174 / 8081).